Consider the following 120-residue polypeptide: BLOC-1-related complex subunit 8 (120 aa).

A disordered region spans residues 101–120; sequence MNTSAQGHSQEKLSPPPSLA. Position 109 is a phosphoserine (S109).

The protein belongs to the BORCS8 family. As to quaternary structure, component of the BLOC-one-related complex (BORC) which is composed of BLOC1S1, BLOC1S2, BORCS5, BORCS6, BORCS7, BORCS8, KXD1 and SNAPIN.

It is found in the lysosome membrane. In terms of biological role, as part of the BLOC-one-related complex (BORC), it plays a role in the movement and localization of lysosomes at the cell periphery. Associated with the cytosolic face of lysosomes, BORC recruits ARL8B to the lysosomal membrane and couples lysosomes to microtubule plus-end-directed kinesin motors, driving lysosome movement toward the cell periphery. The chain is BLOC-1-related complex subunit 8 from Mus musculus (Mouse).